The sequence spans 340 residues: Fructose-1,6-bisphosphatase class 1 (340 aa).

Mg(2+)-binding residues include Glu-107, Asp-126, Leu-128, and Asp-129. A substrate-binding site is contributed by Asn-215. Glu-287 is a Mg(2+) binding site.

This sequence belongs to the FBPase class 1 family. Homotetramer. Mg(2+) is required as a cofactor.

It localises to the cytoplasm. It catalyses the reaction beta-D-fructose 1,6-bisphosphate + H2O = beta-D-fructose 6-phosphate + phosphate. It functions in the pathway carbohydrate biosynthesis; gluconeogenesis. The sequence is that of Fructose-1,6-bisphosphatase class 1 from Brucella canis (strain ATCC 23365 / NCTC 10854 / RM-666).